Consider the following 611-residue polypeptide: Alkyldihydroxyacetonephosphate synthase (611 aa).

Residues 137–317 (VKNAPDLIVL…TEAVMKVHAV (181 aa)) enclose the FAD-binding PCMH-type domain. Residues 169–175 (PMGGGSN), 237–243 (DSFEFST), 250–255 (TCSSGH), and 301–307 (EGTLGII) contribute to the FAD site. A substrate-binding site is contributed by Arg447. Tyr508 acts as the Proton donor/acceptor in catalysis. The interval 544–546 (HHH) is important for enzyme activity. Residues 609 to 611 (PKL) carry the Microbody targeting signal motif.

The protein belongs to the FAD-binding oxidoreductase/transferase type 4 family. In terms of assembly, homodimer. FAD is required as a cofactor.

It is found in the peroxisome. The enzyme catalyses a long chain fatty alcohol + a 1-acylglycerone 3-phosphate = a 1-O-alkylglycerone 3-phosphate + a long-chain fatty acid + H(+). The protein operates within glycerolipid metabolism; ether lipid biosynthesis. Its function is as follows. Catalyzes the exchange of an acyl for a long-chain alkyl group and the formation of the ether bond in the biosynthesis of ether phospholipids. The chain is Alkyldihydroxyacetonephosphate synthase (eapA) from Dictyostelium discoideum (Social amoeba).